Reading from the N-terminus, the 89-residue chain is Signal recognition particle 19 kDa protein (89 aa).

Belongs to the SRP19 family. As to quaternary structure, part of the signal recognition particle protein translocation system, which is composed of SRP and FtsY. Archaeal SRP consists of a 7S RNA molecule of 300 nucleotides and two protein subunits: SRP54 and SRP19.

The protein resides in the cytoplasm. Functionally, involved in targeting and insertion of nascent membrane proteins into the cytoplasmic membrane. Binds directly to 7S RNA and mediates binding of the 54 kDa subunit of the SRP. This is Signal recognition particle 19 kDa protein from Methanococcus vannielii (strain ATCC 35089 / DSM 1224 / JCM 13029 / OCM 148 / SB).